Consider the following 163-residue polypeptide: ATP synthase subunit b', chloroplastic (163 aa).

Residues 26–46 (ATLPLMALQFILLTVILTFVF) form a helical membrane-spanning segment.

The protein belongs to the ATPase B chain family. As to quaternary structure, F-type ATPases have 2 components, F(1) - the catalytic core - and F(0) - the membrane proton channel. F(1) has five subunits: alpha(3), beta(3), gamma(1), delta(1), epsilon(1). F(0) has four main subunits: a(1), b(1), b'(1) and c(10-14). The alpha and beta chains form an alternating ring which encloses part of the gamma chain. F(1) is attached to F(0) by a central stalk formed by the gamma and epsilon chains, while a peripheral stalk is formed by the delta, b and b' chains.

The protein resides in the plastid. It is found in the chloroplast thylakoid membrane. In terms of biological role, f(1)F(0) ATP synthase produces ATP from ADP in the presence of a proton or sodium gradient. F-type ATPases consist of two structural domains, F(1) containing the extramembraneous catalytic core and F(0) containing the membrane proton channel, linked together by a central stalk and a peripheral stalk. During catalysis, ATP synthesis in the catalytic domain of F(1) is coupled via a rotary mechanism of the central stalk subunits to proton translocation. Functionally, component of the F(0) channel, it forms part of the peripheral stalk, linking F(1) to F(0). The b'-subunit is a diverged and duplicated form of b found in plants and photosynthetic bacteria. This chain is ATP synthase subunit b', chloroplastic, found in Ochrosphaera neapolitana.